We begin with the raw amino-acid sequence, 760 residues long: Probable myosin-binding protein 4 (760 aa).

The chain crosses the membrane as a helical span at residues 26-46 (WFLILLMFIDALLSYLLVWFA). Disordered regions lie at residues 161-189 (SRGR…SLKK), 247-273 (SEKR…QPVL), 292-311 (SMLG…VKAK), and 348-595 (EAEV…KHSA). Over residues 352 to 366 (SGSSSPSGGEFLSPS) the composition is skewed to low complexity. A compositionally biased stretch (basic and acidic residues) spans 371–383 (ASREIRIQEHDDS). A compositionally biased stretch (polar residues) spans 385–394 (DFSQNITSSA). Residues 388–416 (QNITSSAMEIEEFEAAIEQKESDHMDVSG) are a coiled coil. A compositionally biased stretch (basic and acidic residues) spans 404 to 413 (IEQKESDHMD). Composition is skewed to acidic residues over residues 446 to 458 (LEQE…ESEV) and 517 to 526 (EEDVDNEESE). 2 stretches are compositionally biased toward basic and acidic residues: residues 537-550 (VKEE…HGDH) and 562-580 (SKEE…KITE). The region spanning 611-709 (SLVEVLKQQL…DLEMELEYYR (99 aa)) is the GTD-binding domain. The interval 725–760 (GILGNTEETNVTSPTDETSIKDSTDTKLTGSPSAEN) is disordered. Polar residues-rich tracts occupy residues 730–741 (TEETNVTSPTDE) and 750–760 (TKLTGSPSAEN).

It is found in the endomembrane system. In terms of biological role, membrane-anchored myosin receptors that define a distinct, plant-specific transport vesicle compartment. The polypeptide is Probable myosin-binding protein 4 (Arabidopsis thaliana (Mouse-ear cress)).